Reading from the N-terminus, the 214-residue chain is Potassium-transporting ATPase KdpC subunit (214 aa).

The helical transmembrane segment at 17–37 (LWVITALIYPFSMIAIGQILF) threads the bilayer.

Belongs to the KdpC family. The system is composed of three essential subunits: KdpA, KdpB and KdpC.

It localises to the cell inner membrane. Part of the high-affinity ATP-driven potassium transport (or Kdp) system, which catalyzes the hydrolysis of ATP coupled with the electrogenic transport of potassium into the cytoplasm. This subunit acts as a catalytic chaperone that increases the ATP-binding affinity of the ATP-hydrolyzing subunit KdpB by the formation of a transient KdpB/KdpC/ATP ternary complex. The polypeptide is Potassium-transporting ATPase KdpC subunit (Microcystis aeruginosa (strain NIES-843 / IAM M-2473)).